We begin with the raw amino-acid sequence, 459 residues long: Spermatogenesis-associated protein 1 (459 aa).

The segment covering 193-205 (LKELPNKNQEEAG) has biased composition (basic and acidic residues). Positions 193–213 (LKELPNKNQEEAGGKATAEKS) are disordered. 2 coiled-coil regions span residues 287 to 374 (TDIS…YKKL) and 400 to 453 (LIIQ…KKII).

As to quaternary structure, interacts with IFT20.

It is found in the cytoplasmic vesicle. It localises to the secretory vesicle. The protein resides in the acrosome. This is Spermatogenesis-associated protein 1 (SPATA1) from Homo sapiens (Human).